Here is a 147-residue protein sequence, read N- to C-terminus: Hemoglobin subunit beta (147 aa).

Residues 2–147 (ELTEAQRGAI…VVSALGKQYH (146 aa)) enclose the Globin domain. Heme b is bound by residues His63 and His92.

This sequence belongs to the globin family. As to quaternary structure, heterotetramer of two alpha chains and two beta chains. In terms of tissue distribution, red blood cells.

Its function is as follows. Involved in oxygen transport from gills to the various peripheral tissues. The chain is Hemoglobin subunit beta (hbb) from Electrophorus electricus (Electric eel).